The chain runs to 651 residues: Gag-Pro polyprotein (651 aa).

Gly-2 carries the N-myristoyl glycine; by host lipid modification. Residues 93–144 (QIPSRPAPPPPSSPTHDPPDSDPQIPPPYVEPTAPQVLPVMHPHGAPPNHRP) are disordered. Residue Ser-105 is modified to Phosphoserine; by host MAPK1. A PPXY motif motif is present at residues 118–121 (PPPY). The short motif at 124-127 (PTAP) is the PTAP/PSAP motif element. 2 consecutive CCHC-type zinc fingers follow at residues 355–372 (QPCF…DCTQ) and 378–395 (GPCP…DCPR). Positions 476–554 (IEALLDTGAD…NNWAIIGRDA (79 aa)) constitute a Peptidase A2 domain. Asp-481 serves as the catalytic For protease activity; shared with dimeric partner.

As to quaternary structure, homodimer; the homodimers are part of the immature particles. Interacts with human TSG101 and NEDD4; these interactions are essential for budding and release of viral particles. Homodimer; further assembles as homohexamers. In terms of processing, specific enzymatic cleavages by the viral protease yield mature proteins. The polyprotein is cleaved during and after budding, this process is termed maturation. The protease is autoproteolytically processed at its N- and C-termini. Post-translationally, phosphorylation of the matrix protein p19 by MAPK1 seems to play a role in budding. Myristoylated. Myristoylation of the matrix (MA) domain mediates the transport and binding of Gag polyproteins to the host plasma membrane and is required for the assembly of viral particles.

The protein resides in the virion. Functionally, the matrix domain targets Gag, Gag-Pro and Gag-Pro-Pol polyproteins to the plasma membrane via a multipartite membrane binding signal, that includes its myristoylated N-terminus. Its function is as follows. Matrix protein. In terms of biological role, forms the spherical core of the virus that encapsulates the genomic RNA-nucleocapsid complex. Binds strongly to viral nucleic acids and promote their aggregation. Also destabilizes the nucleic acids duplexes via highly structured zinc-binding motifs. Functionally, the aspartyl protease mediates proteolytic cleavages of Gag and Gag-Pol polyproteins during or shortly after the release of the virion from the plasma membrane. Cleavages take place as an ordered, step-wise cascade to yield mature proteins. This process is called maturation. Displays maximal activity during the budding process just prior to particle release from the cell. Cleaves the translation initiation factor eIF4G leading to the inhibition of host cap-dependent translation. This chain is Gag-Pro polyprotein (gag-pro), found in Human T-cell leukemia virus 1 (strain Japan ATK-1 subtype A) (HTLV-1).